Reading from the N-terminus, the 463-residue chain is MMQKKLLLIVSIILNLVFTIHILYYSSTTWNPTWTNRAAAEAETVASFSCSGHGRAFVDGLGVLDGQKPPCECNNCYIGKDCSVLLKDCPVDANSGDPLFLEPFWMRQAERSAILVSGWHRMSYIYEDGTYVSRELEKVIRKLHSVVGNAVTDNRFVIFGSGTTQLLAAAVHALSLTNSSVSSPARLLTSIPYYAMYKDQAEFFDSAHLKFEGNASAWKQSGRNDNITQVIEVVTSPNNPDGKLKRAVLDGPNVKTLHDYAYYWPHFSPITHPVDEDLSLFSLSKTTGHAGSRFGWGLVKDKAIYEKMDRFIRLTSMGVSKETQLHVLQLLKVVVGDGGNEIFSFGYGTVKKRWETLNKIFSMSTRFSLQTIKPEYCNYFKKVREFTPSYAWVKCERPEDTNCYEIFRAAKITGRNGNVFGSEERFVRLSLIRSQDDFDQLIAMLKKLVYHEEDVPSENFMYI.

Residues 6-26 traverse the membrane as a helical segment; sequence LLLIVSIILNLVFTIHILYYS. Residues Tyr-124, 163 to 164, Asn-239, 259 to 262, 282 to 285, and Arg-293 each bind pyridoxal 5'-phosphate; these read TT, DYAY, and SLSK. Residue Lys-285 is modified to N6-(pyridoxal phosphate)lysine.

The protein belongs to the alliinase family. Pyridoxal 5'-phosphate serves as cofactor.

It localises to the membrane. In terms of biological role, probable aminotransferase. The polypeptide is Tryptophan aminotransferase-related protein 4 (TAR4) (Arabidopsis thaliana (Mouse-ear cress)).